The chain runs to 338 residues: uncharacterized protein (338 aa).

The tract at residues 1-72 (MASPPILSRE…LNPVEDYDSK (72 aa)) is disordered. The span at 24–38 (GGNSEVNIDPSASSS) shows a compositional bias: polar residues. The segment covering 49-58 (ADTKIDPHLL) has biased composition (basic and acidic residues). Positions 59–68 (EEDDLNPVED) are enriched in acidic residues.

The protein resides in the cytoplasm. Its subcellular location is the nucleus. This is an uncharacterized protein from Schizosaccharomyces pombe (strain 972 / ATCC 24843) (Fission yeast).